A 685-amino-acid polypeptide reads, in one-letter code: DNA ligase (685 aa).

Residues 48-52 (DAEYD), 97-98 (SL), and Glu131 contribute to the NAD(+) site. Lys133 (N6-AMP-lysine intermediate) is an active-site residue. NAD(+) contacts are provided by Arg154, Glu190, Lys304, and Lys328. Residues Cys422, Cys425, Cys440, and Cys445 each coordinate Zn(2+). Positions 603-685 (PEEGPLSGRR…RLLSGEERPG (83 aa)) constitute a BRCT domain.

The protein belongs to the NAD-dependent DNA ligase family. LigA subfamily. Mg(2+) serves as cofactor. Mn(2+) is required as a cofactor.

It catalyses the reaction NAD(+) + (deoxyribonucleotide)n-3'-hydroxyl + 5'-phospho-(deoxyribonucleotide)m = (deoxyribonucleotide)n+m + AMP + beta-nicotinamide D-nucleotide.. DNA ligase that catalyzes the formation of phosphodiester linkages between 5'-phosphoryl and 3'-hydroxyl groups in double-stranded DNA using NAD as a coenzyme and as the energy source for the reaction. It is essential for DNA replication and repair of damaged DNA. This Rubrobacter xylanophilus (strain DSM 9941 / JCM 11954 / NBRC 16129 / PRD-1) protein is DNA ligase.